Here is a 91-residue protein sequence, read N- to C-terminus: Small ribosomal subunit protein uS19 (91 aa).

It belongs to the universal ribosomal protein uS19 family.

In terms of biological role, protein S19 forms a complex with S13 that binds strongly to the 16S ribosomal RNA. The chain is Small ribosomal subunit protein uS19 from Methylacidiphilum infernorum (isolate V4) (Methylokorus infernorum (strain V4)).